We begin with the raw amino-acid sequence, 192 residues long: MIYQKQRNTAETQLNISISDDQSPSHINTGVGFLNHMLTLFTFHSGLSLNIEAQGDIDVDDHHVTEDIGIVIGQLLLEMIKDKKHFVRYGTMYIPMDETLARVVVDISGRPYLSFNASLSKEKVGTFDTELVEEFFRAVVINARLTTHIDLIRGGNTHHEIEAIFKAFSRALGIALTATDDQRVPSSKGVIE.

Belongs to the imidazoleglycerol-phosphate dehydratase family.

It localises to the cytoplasm. The enzyme catalyses D-erythro-1-(imidazol-4-yl)glycerol 3-phosphate = 3-(imidazol-4-yl)-2-oxopropyl phosphate + H2O. Its pathway is amino-acid biosynthesis; L-histidine biosynthesis; L-histidine from 5-phospho-alpha-D-ribose 1-diphosphate: step 6/9. The sequence is that of Imidazoleglycerol-phosphate dehydratase from Staphylococcus aureus (strain JH9).